The sequence spans 348 residues: Phosphatidylinositol 3,4,5-trisphosphate 3-phosphatase ptn1 (348 aa).

A Phosphatase tensin-type domain is found at 18–189 (EKVNRSFAYL…YYIEILKQFP (172 aa)). C129 functions as the Phosphocysteine intermediate in the catalytic mechanism.

Its subcellular location is the cytoplasmic vesicle. The enzyme catalyses a 1,2-diacyl-sn-glycero-3-phospho-(1D-myo-inositol-3,4,5-trisphosphate) + H2O = a 1,2-diacyl-sn-glycero-3-phospho-(1D-myo-inositol-4,5-bisphosphate) + phosphate. It catalyses the reaction 1,2-dioctanoyl-sn-glycero-3-phospho-(1D-myo-inositol-3,4,5-trisphosphate) + H2O = 1,2-dioctanoyl-sn-glycero-3-phospho-(1D-myo-inositol-4,5-bisphosphate) + phosphate. The catalysed reaction is 1,2-dihexadecanoyl-sn-glycero-3-phospho-(1D-myo-inositol-3,4,5-trisphosphate) + H2O = 1,2-dihexadecanoyl-sn-glycero-3-phospho-(1D-myo-inositol-4,5-bisphosphate) + phosphate. Acts as a phosphoinositide 3-phosphatase and regulates PtdIns(3,4,5)P3 levels. The chain is Phosphatidylinositol 3,4,5-trisphosphate 3-phosphatase ptn1 (ptn1) from Schizosaccharomyces pombe (strain 972 / ATCC 24843) (Fission yeast).